A 589-amino-acid chain; its full sequence is uncharacterized protein (589 aa).

Helical transmembrane passes span 11 to 31 (LNWI…TMLA), 57 to 77 (LILM…FSVL), 97 to 117 (FWFF…HAIA), 190 to 210 (IEFT…GFNI), and 213 to 233 (GVVF…VWIG). The 301-residue stretch at 57-357 (LILMLLVLFI…FRLFYEQFTL (301 aa)) folds into the ABC transmembrane type-1 domain. Residues 390–587 (VALKNFGIKD…QLKLDVCLLC (198 aa)) enclose the ABC transporter domain. ATP is bound at residue 423–430 (GASGTGKT).

The protein belongs to the ABC transporter superfamily.

It localises to the cell inner membrane. This is an uncharacterized protein from Haemophilus influenzae (strain ATCC 51907 / DSM 11121 / KW20 / Rd).